Here is a 323-residue protein sequence, read N- to C-terminus: NADH-ubiquinone oxidoreductase chain 1 (323 aa).

The next 8 helical transmembrane spans lie at 9–29 (ILNP…LTLI), 76–96 (LFVL…PMPM), 107–127 (ILFV…SGWA), 145–165 (ISYE…SGGF), 175–195 (EATW…ISTL), 227–247 (LFFL…AVLF), 258–278 (EFTS…FLWV), and 298–318 (FLPL…ACAG).

This sequence belongs to the complex I subunit 1 family.

Its subcellular location is the mitochondrion inner membrane. The catalysed reaction is a ubiquinone + NADH + 5 H(+)(in) = a ubiquinol + NAD(+) + 4 H(+)(out). In terms of biological role, core subunit of the mitochondrial membrane respiratory chain NADH dehydrogenase (Complex I) that is believed to belong to the minimal assembly required for catalysis. Complex I functions in the transfer of electrons from NADH to the respiratory chain. The immediate electron acceptor for the enzyme is believed to be ubiquinone. In Gadus morhua (Atlantic cod), this protein is NADH-ubiquinone oxidoreductase chain 1 (MT-ND1).